The following is a 296-amino-acid chain: Protoheme IX farnesyltransferase (296 aa).

The Cytoplasmic portion of the chain corresponds to 1-9; sequence MMFKQYLQV. Residues 10–28 traverse the membrane as a helical segment; sequence TKPGIIFGNLISVIGGFLL. Residues 29-37 are Periplasmic-facing; the sequence is ASKGSIDYP. A helical membrane pass occupies residues 38-56; sequence LFIYTLVGVSLVVASGCVF. Residues 57-78 lie on the Cytoplasmic side of the membrane; it reads NNYIDRDIDRKMERTKNRVLVK. Residues 79-97 traverse the membrane as a helical segment; it reads GLISPAVSLVYATLLGIAG. At 98 to 107 the chain is on the periplasmic side; the sequence is FMLLWFGANP. Residues 108 to 126 form a helical membrane-spanning segment; that stretch reads LACWLGVMGFVVYVGVYSL. Residues 127–197 lie on the Cytoplasmic side of the membrane; that stretch reads YMKRHSVYGT…YQAANIPVLP (71 aa). Residues 198 to 216 form a helical membrane-spanning segment; sequence VVKGISVAKNHITLYIIAF. The Periplasmic segment spans residues 217–228; sequence AVATLMLSLGGY. A helical membrane pass occupies residues 229-247; that stretch reads AGYKYLVVAAAVSVWWLGM. Residues 248–268 lie on the Cytoplasmic side of the membrane; sequence ALRGYKVADDRIWARKLFGFS. The chain crosses the membrane as a helical span at residues 269 to 287; sequence IIAITALSVMMSVDFMVPD. The Periplasmic segment spans residues 288 to 296; that stretch reads SHTLLAAVW.

This sequence belongs to the UbiA prenyltransferase family. Protoheme IX farnesyltransferase subfamily.

The protein resides in the cell inner membrane. It catalyses the reaction heme b + (2E,6E)-farnesyl diphosphate + H2O = Fe(II)-heme o + diphosphate. It functions in the pathway porphyrin-containing compound metabolism; heme O biosynthesis; heme O from protoheme: step 1/1. In terms of biological role, converts heme B (protoheme IX) to heme O by substitution of the vinyl group on carbon 2 of heme B porphyrin ring with a hydroxyethyl farnesyl side group. The polypeptide is Protoheme IX farnesyltransferase (Escherichia coli O139:H28 (strain E24377A / ETEC)).